A 1053-amino-acid chain; its full sequence is Serine/threonine-protein phosphatase 6 regulatory ankyrin repeat subunit A (1053 aa).

27 ANK repeats span residues 40-69 (EKRTPLHAAAYLGDAEIIELLILSGARVNA), 73-102 (KWLTPLHRAVASCSEEAVQILLKHSADVNA), 106-135 (NWQTPLHIAAANKAVKCAESLVPLLSNVNV), 139-168 (AGRTALHHAAFSGHGEMVKLLLSRGANINA), 172-201 (KDRRAIHWAAYMGHIEVVKLLVSHGAEVTC), 205-234 (KSYTPLHAAASSGMISVVKYLLDLGVDMNE), 238-267 (YGNTPLHVACYNGQDVVVNELIDCGANVNQ), 271-301 (KGFTPLHFAAASTHGALCLELLVGNGADVNM), 305-334 (DGKTPLHMTALHGRFSRSQTIIQSGAVIDC), 338-367 (NGNTPLHIAARYGHELLINTLITSGADTAK), 371-400 (HGMFPLHLAALSGFSDCCRKLLSSGFDIDT), 404-433 (FGRTCLHAAAAGGNLECLNLLLNTGADFNK), 437-466 (FGRSPLHYAAANCNYQCLFALVGSGASVND), 470-500 (RGCTPLHYAATSDTDGKCLEYLLRNDANPGI), 504-534 (QGYNAVHYSAAYGHRLCLQLIASETPLDVLM), 549-578 (ATISPLHLAAYHGHHQALEVLVQSLLDLDV), 582-611 (SGRTPLDLAAFKGHVECVDVLINQGASILV), 616-645 (LKRTPIHAAATNGHSECLRLLIGNAEPQNA), 652-681 (NGQTPLMLSVLNGHTDCVYSLLNKGANVDA), 685-714 (WGRTALHRGAVTGHEECVDALLQHGAKCLL), 718-747 (RGRTPIHLSAACGHIGVLGALLQSATSVDA), 755-786 (HGYTALHWACYNGHETCVELLLEQDVFQKIDG), 788-817 (AFSPLHCAVINDNEGAAEMLIDSLGASIVN), 822-851 (KGRTPLHAAAFTDHVECLQLLLSQNAQVNS), 855-885 (TGKTPLMMAAENGQTNTVEMLVSSASADLTL), 889-918 (SKNTALHLACGKGHETSALLILEKITDRNL), and 925-954 (ALQTPLHVAARNGLTMVVQELLGKGASVLA). 2 positions are modified to phosphoserine: Ser1007 and Ser1011.

Protein phosphatase 6 (PP6) holoenzyme is proposed to be a heterotrimeric complex formed by the catalytic subunit, a SAPS domain-containing subunit (PP6R) and an ankyrin repeat-domain containing regulatory subunit (ARS). Interacts with PPP1C and HNRPK. Interacts with PPP6C, PPP6R1 and PPP6R3. Post-translationally, ubiquitinated by the ECS(RAB40C) complex leading to its degradation and decreased PP6 activity. As to expression, widely expressed (at protein level).

It is found in the nucleus. Its subcellular location is the nucleoplasm. The protein localises to the cytoplasm. The protein resides in the cytosol. It localises to the cell projection. It is found in the lamellipodium. Functionally, putative regulatory subunit of protein phosphatase 6 (PP6) that may be involved in the recognition of phosphoprotein substrates. Involved in the PP6-mediated dephosphorylation of NFKBIE opposing its degradation in response to TNF-alpha. Selectively inhibits the phosphatase activity of PPP1C. Targets PPP1C to modulate HNRPK phosphorylation. Involved in the PP6-mediated dephosphorylation of MOB1 and induced focal adhesion assembly during cell migration. The sequence is that of Serine/threonine-protein phosphatase 6 regulatory ankyrin repeat subunit A (Ankrd28) from Mus musculus (Mouse).